The primary structure comprises 357 residues: Cytosolic Fe-S cluster assembly factor NAR1 (357 aa).

[4Fe-4S] cluster contacts are provided by cysteine 14, cysteine 28, cysteine 31, cysteine 34, cysteine 129, cysteine 172, cysteine 297, and cysteine 301.

Belongs to the NARF family.

Functionally, component of the cytosolic Fe/S protein assembly machinery. May play a role in the transfer of pre-assembled Fe/S clusters to target apoproteins. The polypeptide is Cytosolic Fe-S cluster assembly factor NAR1 (NAR1) (Encephalitozoon cuniculi (strain GB-M1) (Microsporidian parasite)).